We begin with the raw amino-acid sequence, 418 residues long: tRNA(Met) cytidine acetate ligase (418 aa).

Residues Gly-95, Asn-161, and Arg-186 each contribute to the ATP site.

Belongs to the TmcAL family.

The protein localises to the cytoplasm. It catalyses the reaction cytidine(34) in elongator tRNA(Met) + acetate + ATP = N(4)-acetylcytidine(34) in elongator tRNA(Met) + AMP + diphosphate. Functionally, catalyzes the formation of N(4)-acetylcytidine (ac(4)C) at the wobble position of elongator tRNA(Met), using acetate and ATP as substrates. First activates an acetate ion to form acetyladenylate (Ac-AMP) and then transfers the acetyl group to tRNA to form ac(4)C34. The chain is tRNA(Met) cytidine acetate ligase from Thermotoga petrophila (strain ATCC BAA-488 / DSM 13995 / JCM 10881 / RKU-1).